A 159-amino-acid polypeptide reads, in one-letter code: Transcriptional repressor NrdR (159 aa).

The segment covering 1–11 (MQCPSCQNTDS) has biased composition (polar residues). Residues 1–20 (MQCPSCQNTDSRVLESRSAD) are disordered. A zinc finger spans residues 3–34 (CPSCQNTDSRVLESRSADSGRSVRRRRECLNC). In terms of domain architecture, ATP-cone spans 49–139 (INVLKRSGAK…VYRQFNGIND (91 aa)).

Belongs to the NrdR family. Zn(2+) is required as a cofactor.

In terms of biological role, negatively regulates transcription of bacterial ribonucleotide reductase nrd genes and operons by binding to NrdR-boxes. This Prochlorococcus marinus (strain NATL1A) protein is Transcriptional repressor NrdR.